The primary structure comprises 181 residues: Lipoprotein signal peptidase (181 aa).

The next 3 membrane-spanning stretches (helical) occupy residues 25-45, 86-106, and 107-127; these read LFYKLTMIGFVGFIILLQVFI, LVYFLQGLLSVIALVFLVFMV, and KYSYIFWITTLAFGSLGNFFD. Residues D138 and D153 contribute to the active site. A helical membrane pass occupies residues 149–169; that stretch reads FNFADCCITFGFIGLFFCFLI.

This sequence belongs to the peptidase A8 family.

The protein resides in the cell membrane. It carries out the reaction Release of signal peptides from bacterial membrane prolipoproteins. Hydrolyzes -Xaa-Yaa-Zaa-|-(S,diacylglyceryl)Cys-, in which Xaa is hydrophobic (preferably Leu), and Yaa (Ala or Ser) and Zaa (Gly or Ala) have small, neutral side chains.. Its pathway is protein modification; lipoprotein biosynthesis (signal peptide cleavage). Its function is as follows. This protein specifically catalyzes the removal of signal peptides from prolipoproteins. The chain is Lipoprotein signal peptidase from Mycoplasma genitalium (strain ATCC 33530 / DSM 19775 / NCTC 10195 / G37) (Mycoplasmoides genitalium).